A 174-amino-acid chain; its full sequence is UPF0398 protein LACR_0544 (174 aa).

Belongs to the UPF0398 family.

The protein is UPF0398 protein LACR_0544 of Lactococcus lactis subsp. cremoris (strain SK11).